Reading from the N-terminus, the 310-residue chain is Carbamate kinase 1 (310 aa).

The protein belongs to the carbamate kinase family.

It is found in the cytoplasm. The enzyme catalyses hydrogencarbonate + NH4(+) + ATP = carbamoyl phosphate + ADP + H2O + H(+). It functions in the pathway metabolic intermediate metabolism; carbamoyl phosphate degradation; CO(2) and NH(3) from carbamoyl phosphate: step 1/1. The chain is Carbamate kinase 1 (arcC1) from Staphylococcus aureus (strain COL).